We begin with the raw amino-acid sequence, 380 residues long: Putative glutamate--cysteine ligase 2-1 (380 aa).

It belongs to the glutamate--cysteine ligase type 2 family. YbdK subfamily.

The enzyme catalyses L-cysteine + L-glutamate + ATP = gamma-L-glutamyl-L-cysteine + ADP + phosphate + H(+). ATP-dependent carboxylate-amine ligase which exhibits weak glutamate--cysteine ligase activity. In Mycolicibacterium vanbaalenii (strain DSM 7251 / JCM 13017 / BCRC 16820 / KCTC 9966 / NRRL B-24157 / PYR-1) (Mycobacterium vanbaalenii), this protein is Putative glutamate--cysteine ligase 2-1.